We begin with the raw amino-acid sequence, 259 residues long: Small ribosomal subunit protein eS1 (259 aa).

Over residues 1–18 (MAVGKNKRISKGKKGGKK) the composition is skewed to basic residues. The segment at 1–22 (MAVGKNKRISKGKKGGKKKASD) is disordered.

This sequence belongs to the eukaryotic ribosomal protein eS1 family. In terms of assembly, component of the small ribosomal subunit. Mature ribosomes consist of a small (40S) and a large (60S) subunit. The 40S subunit contains about 33 different proteins and 1 molecule of RNA (18S). The 60S subunit contains about 49 different proteins and 3 molecules of RNA (25S, 5.8S and 5S).

The protein resides in the cytoplasm. In Chlamydomonas reinhardtii (Chlamydomonas smithii), this protein is Small ribosomal subunit protein eS1.